Reading from the N-terminus, the 338-residue chain is Malate dehydrogenase, mitochondrial (338 aa).

Residues 1-24 (MLSALARPASAVLRRSFSTSAQNN) constitute a mitochondrion transit peptide. NAD(+) is bound by residues 31–37 (GASGGIG) and Asp57. An O-linked (GlcNAc) serine glycan is attached at Ser33. An N6-acetyllysine; alternate mark is found at Lys78 and Lys91. 2 positions are modified to N6-succinyllysine; alternate: Lys78 and Lys91. Residues Arg104 and Arg110 each contribute to the substrate site. NAD(+) is bound by residues Asn117 and 140-142 (IAN). Asn142 is a substrate binding site. An N6-acetyllysine modification is found at Lys165. Residue Arg176 participates in substrate binding. Position 185 is an N6-acetyllysine; alternate (Lys185). Lys185 bears the N6-succinyllysine; alternate mark. The active-site Proton acceptor is His200. Residue Lys203 is modified to N6-succinyllysine. Residues Lys215 and Lys239 each carry the N6-acetyllysine; alternate modification. N6-succinyllysine; alternate occurs at positions 215 and 239. Residue Lys239 is modified to N6-malonyllysine; alternate. Residue Ser246 is modified to Phosphoserine. Met251 provides a ligand contact to NAD(+). The residue at position 269 (Lys269) is an N6-succinyllysine. 5 positions are modified to N6-acetyllysine; alternate: Lys296, Lys301, Lys307, Lys314, and Lys324. 5 positions are modified to N6-succinyllysine; alternate: Lys296, Lys301, Lys307, Lys314, and Lys324. Lys307 carries the N6-malonyllysine; alternate modification. The residue at position 326 (Ser326) is a Phosphoserine. N6-acetyllysine; alternate is present on residues Lys328, Lys329, and Lys335. Residue Lys328 is modified to N6-succinyllysine; alternate. Position 329 is an N6-malonyllysine; alternate (Lys329). Lys335 bears the N6-succinyllysine; alternate mark.

Belongs to the LDH/MDH superfamily. MDH type 1 family. In terms of assembly, homodimer. In terms of processing, acetylation is enhanced after treatment either with trichostin A (TCA) or with nicotinamide (NAM) with the appearance of tri- and tetraacetylations. Glucose also increases acetylation.

Its subcellular location is the mitochondrion matrix. The catalysed reaction is (S)-malate + NAD(+) = oxaloacetate + NADH + H(+). Its activity is regulated as follows. Enzyme activity is enhanced by acetylation. This is Malate dehydrogenase, mitochondrial (MDH2) from Pongo abelii (Sumatran orangutan).